The following is a 461-amino-acid chain: MTRTIVVGLGRSGLGAARLLKQQNHDVVVFERGNNEALQHTSKTLAEEGIQVVLGQPLTLQSFDAWRDNLDAVVIGPGIPWDHPTLVQLRSEGVQVRGEMDTAWDALQQIPWIGITGTNGKTTVTHLLSHVLEAAGLTAPMGGNIGLSAAELACQIGSGAKPRPDWLVMELSSYQIEAAPAVAPKIGIWTTLTPDHLERHGSLEAYRAIKRGLLERSECALFNADDPDLRQQRSSWNRGTWVSSEGAHPDNQPADLWIDDEGMVRNNTTRLFAADVLAMPGRHNRQNLLLVTAAALEAGLSPQQIADALRTFPGVPHRLEQLGTLAGASVFNDSKATNYDAAEVGLRAVQGPVVVLAGGQTKQGDASGWLKQLQSKACSLILFGAGADELASLAKAAGYPGELLQCPELESAVNLAEGAVQRHQASSLLLSPACASFDQYRDFEARGEHFRTLINPLLDEA.

Residue 117–123 (GTNGKTT) participates in ATP binding.

It belongs to the MurCDEF family.

The protein resides in the cytoplasm. It catalyses the reaction UDP-N-acetyl-alpha-D-muramoyl-L-alanine + D-glutamate + ATP = UDP-N-acetyl-alpha-D-muramoyl-L-alanyl-D-glutamate + ADP + phosphate + H(+). It participates in cell wall biogenesis; peptidoglycan biosynthesis. In terms of biological role, cell wall formation. Catalyzes the addition of glutamate to the nucleotide precursor UDP-N-acetylmuramoyl-L-alanine (UMA). In Synechococcus sp. (strain CC9605), this protein is UDP-N-acetylmuramoylalanine--D-glutamate ligase.